The chain runs to 458 residues: MTVTIVGSQLGDEGKGGIVDLYGDDVDVVARYQGGDNAGHTVVHEGEEYKLSLVPSGAIRGKVGVLGNGCVVNPRTLFDEIDTLQERGLDPDVRIAERAHVILPFHRVLDGIEEELKSETDDEVGTTGRGIGPTYEDKAGRRGVRVGDLLDPDVLRERLEYVVPQKRAVVEDVYDLDVDELDDPDAFDVDAIFEEFREFGRRFEAEDMTVNAGAFLSATIDEGQNVMLEGAQGTIIDIDHGNYPYVTSSNPTAGGAATGTGLSPGVVGDGEVIGIVKAYLTRVGSGPLPTELGGVVGDTPGYDEQGEGENEELANYIREEGGEYGTVTGRPRRVGWLDLPMLRHSTRVSGFTGIAINHLDVLAGLDEVKVGHTYTLDGEELASMPATTEQWAKCEANFRSFDGWPEVDWADAAEEGYDALPENAKAYVEYIESELDTPAYAIGVGPGRGETIVREQPF.

GTP is bound by residues Gly-11 to Gly-17 and Gly-39 to Thr-41. Asp-12 functions as the Proton acceptor in the catalytic mechanism. Residues Asp-12 and Gly-39 each coordinate Mg(2+). IMP-binding positions include Asp-12–Lys-15, Asn-37–His-40, Thr-127, Arg-141, Gln-232, Thr-247, and Arg-330. The active-site Proton donor is the His-40. Thr-326 to Arg-332 is a binding site for substrate. Residues Arg-332, His-358 to Asp-360, and Gly-443 to Gly-445 contribute to the GTP site.

This sequence belongs to the adenylosuccinate synthetase family. In terms of assembly, homodimer. It depends on Mg(2+) as a cofactor.

It is found in the cytoplasm. The catalysed reaction is IMP + L-aspartate + GTP = N(6)-(1,2-dicarboxyethyl)-AMP + GDP + phosphate + 2 H(+). The protein operates within purine metabolism; AMP biosynthesis via de novo pathway; AMP from IMP: step 1/2. Its function is as follows. Plays an important role in the de novo pathway of purine nucleotide biosynthesis. Catalyzes the first committed step in the biosynthesis of AMP from IMP. This is Adenylosuccinate synthetase from Haloarcula marismortui (strain ATCC 43049 / DSM 3752 / JCM 8966 / VKM B-1809) (Halobacterium marismortui).